We begin with the raw amino-acid sequence, 173 residues long: Putative pre-16S rRNA nuclease (173 aa).

Belongs to the YqgF nuclease family.

Its subcellular location is the cytoplasm. Functionally, could be a nuclease involved in processing of the 5'-end of pre-16S rRNA. This is Putative pre-16S rRNA nuclease from Psychrobacter cryohalolentis (strain ATCC BAA-1226 / DSM 17306 / VKM B-2378 / K5).